The following is a 792-amino-acid chain: MRFTLSWLLEHLETNASLEEITDKLTHIGLEVKDVVDNTKLAGFIVAKVLEVTPHPNVDKLKLCKVDNGSKILQIVCGANNVREGLKTVLASLGSTLPESNFTIKPTKIRGVLSEGILCSASELMLAQEKSKGIIELSDDYKVGNKFFNCDPVIDINVTTNRGDCLSVHGIARDLAATGIGTLNSLIYSSAIPAHDTGIQDRSKSGMTRSSSINVKVIDGESFISGVYISNVRNKESPRWLKDRLESVGMRSISAIVDITNYIMMSFGRPMHAYDAKKIEGKLIVRKANNGEKFTGLNGKEYLLNNDISVISDNNNIHAIAGIIGGKCSKCTLETTDVFLESAWFNPISVTKSSRQLNISTDSSYRFARSVDPGFILDGLHFAAQMIVDLCGGKASNVVFAGSLDEADTKVSFDYQDVNKFGSVSVLPDEMFDILTKLGFSTDKKTENNWNVKVPSWRSDVTIPADLVEEVVRIYGYDKIKEEPLIDNVEVEINTHDNLRVLMISRGFHEVFTWSFMSESIAEKFGYSNKLFIIDNPFNNNFNIMRPSIVPNLLQVTADNIVHGMSDLAIFEIGPVYDSLDQPKYSLSGIRTGNNLPRNHYNTDRKIDVFDAKADLIAALELFNVSYGNLTIERAEKEYYHPGKSGTLSFKNKATGYFGELHPNILDLFDIKQKVVGFEMILENMGNLPVSREKFIDYKHQSVKRDFAFIVNRDVEVGKIINMVKKSSELITEVFVFDVYHGNNMEPNKMSIALSVTFCSPTHTLIEEEIQKESSAIVNLVHKNTGGILRYT.

The tRNA-binding domain maps to 38–148; that stretch reads NTKLAGFIVA…DDYKVGNKFF (111 aa). The 77-residue stretch at 406–482 folds into the B5 domain; it reads EADTKVSFDY…RIYGYDKIKE (77 aa). Mg(2+) contacts are provided by aspartate 460, aspartate 466, glutamate 469, and glutamate 470. The FDX-ACB domain maps to 698–790; it reads YKHQSVKRDF…VHKNTGGILR (93 aa).

It belongs to the phenylalanyl-tRNA synthetase beta subunit family. Type 1 subfamily. In terms of assembly, tetramer of two alpha and two beta subunits. It depends on Mg(2+) as a cofactor.

It is found in the cytoplasm. The catalysed reaction is tRNA(Phe) + L-phenylalanine + ATP = L-phenylalanyl-tRNA(Phe) + AMP + diphosphate + H(+). This is Phenylalanine--tRNA ligase beta subunit from Wolbachia sp. subsp. Brugia malayi (strain TRS).